Here is a 334-residue protein sequence, read N- to C-terminus: Fructose-1,6-bisphosphatase class 1 (334 aa).

Residues glutamate 89, aspartate 112, leucine 114, and aspartate 115 each coordinate Mg(2+). Substrate contacts are provided by residues 115–118 (DGSS), asparagine 208, tyrosine 241, and lysine 271. Glutamate 277 contacts Mg(2+).

This sequence belongs to the FBPase class 1 family. As to quaternary structure, homotetramer. Mg(2+) serves as cofactor.

It is found in the cytoplasm. The catalysed reaction is beta-D-fructose 1,6-bisphosphate + H2O = beta-D-fructose 6-phosphate + phosphate. It participates in carbohydrate biosynthesis; gluconeogenesis. The sequence is that of Fructose-1,6-bisphosphatase class 1 from Serratia proteamaculans (strain 568).